The following is a 75-amino-acid chain: Sec-independent protein translocase protein TatA (75 aa).

A helical membrane pass occupies residues 1-21; the sequence is MGSFSIWHWLIVLVIIALVFG. Positions 45–75 are disordered; the sequence is DASADKPADQVTQQRVSDDTIDVQAKEKSNS.

This sequence belongs to the TatA/E family. As to quaternary structure, the Tat system comprises two distinct complexes: a TatABC complex, containing multiple copies of TatA, TatB and TatC subunits, and a separate TatA complex, containing only TatA subunits. Substrates initially bind to the TatABC complex, which probably triggers association of the separate TatA complex to form the active translocon.

Its subcellular location is the cell inner membrane. Functionally, part of the twin-arginine translocation (Tat) system that transports large folded proteins containing a characteristic twin-arginine motif in their signal peptide across membranes. TatA could form the protein-conducting channel of the Tat system. This Bordetella bronchiseptica (strain ATCC BAA-588 / NCTC 13252 / RB50) (Alcaligenes bronchisepticus) protein is Sec-independent protein translocase protein TatA.